Consider the following 769-residue polypeptide: Phenylalanine--tRNA ligase beta subunit (769 aa).

Residues 40–141 (GKLLTIARVA…GEPIPGCEPD (102 aa)) form the tRNA-binding domain. The B5 domain maps to 389–467 (PAPPPIELPL…RMIGYDSIAP (79 aa)). Mg(2+) is bound by residues aspartate 445, aspartate 451, glutamate 454, and glutamate 455. The 93-residue stretch at 676-768 (RRYPSSAFDL…GMRAKGYELR (93 aa)) folds into the FDX-ACB domain.

The protein belongs to the phenylalanyl-tRNA synthetase beta subunit family. Type 1 subfamily. As to quaternary structure, tetramer of two alpha and two beta subunits. Mg(2+) serves as cofactor.

It is found in the cytoplasm. It catalyses the reaction tRNA(Phe) + L-phenylalanine + ATP = L-phenylalanyl-tRNA(Phe) + AMP + diphosphate + H(+). The sequence is that of Phenylalanine--tRNA ligase beta subunit from Solibacter usitatus (strain Ellin6076).